The chain runs to 81 residues: uncharacterized protein (81 aa).

A disordered region spans residues 55–81 (LDKRNSNNKIEKSENTGENHDNNQDQK).

This is an uncharacterized protein from Thermoproteus tenax virus 1 (strain KRA1) (TTV1).